Here is a 7756-residue protein sequence, read N- to C-terminus: Linear gramicidin synthase subunit C (7756 aa).

Carrier domains are found at residues 977-1052 (EPRN…AALQ), 2042-2116 (APAT…ADSS), 3557-3632 (APRT…ASLL), 4621-4695 (APAT…TVTD), 6141-6216 (APRK…AGLL), and 7200-7274 (APET…GDSV). O-(pantetheine 4'-phosphoryl)serine is present on residues Ser-1012, Ser-2077, Ser-3592, Ser-4656, Ser-6176, and Ser-7235.

Belongs to the ATP-dependent AMP-binding enzyme family. In terms of assembly, large multienzyme complex composed of 4 subunits; LgrA, LgrB, LgrC and LgrD. It depends on pantetheine 4'-phosphate as a cofactor.

Its function is as follows. Activates the 7th to 12th amino acids (Val, D-Val, Trp, D-Leu, Xaa and D-Leu) in linear gramicidin and catalyzes the formation of the peptide bond between them. This enzyme is also responsible for the epimerization of the 8th (D-Val), the 10th (D-Leu) and 12th (D-Leu) amino acids. The 11th (Xaa) amino acid is Trp in linear gramicidin A; Phe in linear gramicidin B and Tyr in linear gramicidin C. The polypeptide is Linear gramicidin synthase subunit C (lgrC) (Brevibacillus parabrevis).